Reading from the N-terminus, the 85-residue chain is UPF0291 protein SEQ_0545 (85 aa).

A disordered region spans residues 62 to 85; it reads TPEKLRQVQREKGLHGRSLDDPES.

It belongs to the UPF0291 family.

The protein resides in the cytoplasm. The protein is UPF0291 protein SEQ_0545 of Streptococcus equi subsp. equi (strain 4047).